Consider the following 116-residue polypeptide: Ribonuclease P protein component (116 aa).

It belongs to the RnpA family. In terms of assembly, consists of a catalytic RNA component (M1 or rnpB) and a protein subunit.

The enzyme catalyses Endonucleolytic cleavage of RNA, removing 5'-extranucleotides from tRNA precursor.. Functionally, RNaseP catalyzes the removal of the 5'-leader sequence from pre-tRNA to produce the mature 5'-terminus. It can also cleave other RNA substrates such as 4.5S RNA. The protein component plays an auxiliary but essential role in vivo by binding to the 5'-leader sequence and broadening the substrate specificity of the ribozyme. This is Ribonuclease P protein component from Caldanaerobacter subterraneus subsp. tengcongensis (strain DSM 15242 / JCM 11007 / NBRC 100824 / MB4) (Thermoanaerobacter tengcongensis).